The following is a 1124-amino-acid chain: Ras-associating and dilute domain-containing protein (1124 aa).

Residues 61–164 (APGVLKIFGD…RRFELRRRAE (104 aa)) form the Ras-associating domain. A disordered region spans residues 226–253 (YYSTLPGPIRTRSARDSEIRKERDGGGV). Basic and acidic residues predominate over residues 238-252 (SARDSEIRKERDGGG). The 59-residue stretch at 284–342 (HTVGQETASARPNICLSSPDVLPLHCRIRRAAQRRSSSDQRLLLEPVAHGNVLVNFMRI) folds into the FHA domain. A Dilute domain is found at 516–809 (ASLSLLSISD…VDLLESFENH (294 aa)). Disordered regions lie at residues 850 to 942 (THPS…TPPN) and 960 to 982 (PEHASQEHTHTHSHTKTNGCMRS). The segment covering 866–876 (PPQPHSSPHPA) has biased composition (pro residues). Over residues 903-912 (AEDRTRDKPT) the composition is skewed to basic and acidic residues. Polar residues predominate over residues 926–937 (ANQSQATDSSCI). Residues 960 to 969 (PEHASQEHTH) are compositionally biased toward basic and acidic residues. The PDZ domain occupies 1027–1112 (VVDLDKGPYG…RLRFLVAKSD (86 aa)).

It belongs to the RADIL family. Interacts with RAP1A; in a GTP-dependent manner. As to expression, ubiquitously expressed and enriched in the anterior part of the embryos.

In terms of biological role, downstream effector of Rap required for cell adhesion and migration of neural crest precursors during development. This chain is Ras-associating and dilute domain-containing protein (radil), found in Danio rerio (Zebrafish).